A 101-amino-acid polypeptide reads, in one-letter code: Pro-corazonin (101 aa).

The first 19 residues, 1–19 (MVTNITLILTLMTLASVTA), serve as a signal peptide directing secretion. Q20 is subject to Pyrrolidone carboxylic acid. Position 30 is an asparagine amide (N30).

Belongs to the corazonin family.

The protein localises to the secreted. Its function is as follows. Cardioactive peptide. Corazonin is probably involved in the physiological regulation of the heart beat. This Bombyx mori (Silk moth) protein is Pro-corazonin (crz).